We begin with the raw amino-acid sequence, 297 residues long: Syntaxin-4 (297 aa).

Positions 1-12 (MRDRTHELRQGD) are enriched in basic and acidic residues. Residues 1–21 (MRDRTHELRQGDDSSDDEDKE) form a disordered region. Residues 1–275 (MRDRTHELRQ…QKKARKKKVF (275 aa)) lie on the Cytoplasmic side of the membrane. Residues S14 and S15 each carry the phosphoserine modification. T31 is subject to Phosphothreonine. S36, S117, S208, and S248 each carry phosphoserine. Residues 43–163 (QKVRTIRQTI…ERIRRQLKIT (121 aa)) adopt a coiled-coil conformation. The 63-residue stretch at 200–262 (LNEISARHSE…ERGQEHVKVA (63 aa)) folds into the t-SNARE coiled-coil homology domain. Residues 276 to 296 (IAICLSITVLILVVIIVISTL) form a helical; Anchor for type IV membrane protein membrane-spanning segment. V297 is a topological domain (extracellular).

Belongs to the syntaxin family. Component of the SNARE complex composed of STX4, SNAP23 and VAMP7 that interacts with SYT7 during lysosomal exocytosis. Found in a complex with VAMP8 and SNAP23. Detected in a complex with SNAP23 and STXBP4. Interacts with VAMP2. Interacts with SNAP23 and SNAPIN. Interacts with LLGL1. Interacts (via C-terminus) with CENPF. Interacts with DOC2B. Interacts with STXBP6. Interacts with STXBP3; excludes interaction with DOC2B and SNAP25. Interacts with STXBP4; excludes interaction with VAMP2. Interacts with STXBP5L.

Its subcellular location is the cell membrane. The protein resides in the cell projection. The protein localises to the neuron projection. It is found in the stereocilium. Functionally, plasma membrane t-SNARE that mediates docking of transport vesicles. Necessary for the translocation of SLC2A4 from intracellular vesicles to the plasma membrane. In neurons, recruited at neurite tips to membrane domains rich in the phospholipid 1-oleoyl-2-palmitoyl-PC (OPPC) which promotes neurite tip surface expression of the dopamine transporter SLC6A3/DAT by facilitating fusion of SLC6A3-containing transport vesicles with the plasma membrane. Together with STXB3 and VAMP2, may also play a role in docking/fusion of intracellular GLUT4-containing vesicles with the cell surface in adipocytes and in docking of synaptic vesicles at presynaptic active zones. Required for normal hearing. This chain is Syntaxin-4 (STX4), found in Bos taurus (Bovine).